The chain runs to 276 residues: Large ribosomal subunit protein uL2 (276 aa).

Disordered regions lie at residues 1-20 (MGIK…TTND) and 219-276 (TVRG…RRKK). Polar residues predominate over residues 7–20 (NPTTNGRRNMTTND).

It belongs to the universal ribosomal protein uL2 family. In terms of assembly, part of the 50S ribosomal subunit. Forms a bridge to the 30S subunit in the 70S ribosome.

In terms of biological role, one of the primary rRNA binding proteins. Required for association of the 30S and 50S subunits to form the 70S ribosome, for tRNA binding and peptide bond formation. It has been suggested to have peptidyltransferase activity; this is somewhat controversial. Makes several contacts with the 16S rRNA in the 70S ribosome. This chain is Large ribosomal subunit protein uL2, found in Bacillus cereus (strain G9842).